The following is a 359-amino-acid chain: MEQQNKRGLKRKALLGGVLGSGGLAMAGCEVSPPGGMIGDFLRMGWPSGITPEAVSMGNFWSWVWVAAWIIGIIMWGLMLTAIFSWNAKKAEKRGEGEFPKQLQYNVPLELVLTIVPIIIVMVLFFFTVQTQDRVTALDKNPEVTVNVTAYQWNWKFGYGELAPEFAPAGGDYDGVDEARQASAEASKIDPSGNNPIHGNSKKDMSYLHFNQIETLGTTDEVPVLVLPTNTPIEFNLASADVAHSFWVPEFLFKRDLYAHPEANKSQRVFQIDEIFEEGAFVGRCAEMCGTYHAMMNFELRTVDRETFAEYIAFRDANPDATNAQALEHIGEAPYATSTAPFVSDRTGTRDGENFQTPA.

The first 28 residues, 1 to 28 (MEQQNKRGLKRKALLGGVLGSGGLAMAG), serve as a signal peptide directing secretion. Residue cysteine 29 is the site of N-palmitoyl cysteine attachment. Cysteine 29 carries S-diacylglycerol cysteine lipidation. The next 2 membrane-spanning stretches (helical) occupy residues 64–84 (VWVAAWIIGIIMWGLMLTAIF) and 107–127 (VPLELVLTIVPIIIVMVLFFF). Positions 244, 285, 287, 289, 293, and 296 each coordinate Cu cation. Residues 338–359 (STAPFVSDRTGTRDGENFQTPA) form a disordered region.

It belongs to the cytochrome c oxidase subunit 2 family. In terms of assembly, associates with subunits I, III and IV to form cytochrome c oxidase. It depends on binuclear copper center (CuA) as a cofactor.

It localises to the cell membrane. It carries out the reaction 4 Fe(II)-[cytochrome c] + O2 + 8 H(+)(in) = 4 Fe(III)-[cytochrome c] + 2 H2O + 4 H(+)(out). Its function is as follows. Subunits I and II form the functional core of the enzyme complex. Electrons originating in cytochrome c are transferred via heme a and Cu(A) to the binuclear center formed by heme a3 and Cu(B). The protein is Cytochrome c oxidase subunit 2 (ctaC) of Corynebacterium efficiens (strain DSM 44549 / YS-314 / AJ 12310 / JCM 11189 / NBRC 100395).